The following is a 347-amino-acid chain: Mitochondrial genome maintenance exonuclease 1 (347 aa).

Residues D246, D259, and K261 contribute to the active site.

The protein belongs to the MGME1 family.

The protein localises to the mitochondrion. Functionally, single-stranded DNA (ssDNA) metal-dependent exonuclease involved in mitochondrial genome maintenance. Has preference for 5'-3' exonuclease activity. Necessary for maintenance of proper 7S DNA levels. Probably involved in mitochondrial DNA (mtDNA) repair. Specifically binds 5-hydroxymethylcytosine (5hmC)-containing DNA in stem cells. This Xenopus tropicalis (Western clawed frog) protein is Mitochondrial genome maintenance exonuclease 1 (mgme1).